The chain runs to 1149 residues: ATP-dependent helicase/deoxyribonuclease subunit B (1149 aa).

In terms of domain architecture, UvrD-like helicase ATP-binding spans 1-276; that stretch reads MAIRYIFGRA…INLDIEERKV (276 aa). 8–15 provides a ligand contact to ATP; the sequence is GRAGRGKS. The UvrD-like helicase C-terminal domain occupies 273–586; sequence ERKVLPKEKE…LVGSIERSKS (314 aa). [4Fe-4S] cluster contacts are provided by cysteine 786, cysteine 1105, cysteine 1108, and cysteine 1114.

Belongs to the helicase family. AddB/RexB type 1 subfamily. In terms of assembly, heterodimer of AddA and AddB. The cofactor is Mg(2+). Requires [4Fe-4S] cluster as cofactor.

The heterodimer acts as both an ATP-dependent DNA helicase and an ATP-dependent, dual-direction single-stranded exonuclease. Recognizes the chi site generating a DNA molecule suitable for the initiation of homologous recombination. The AddB subunit has 5' -&gt; 3' nuclease activity but not helicase activity. This chain is ATP-dependent helicase/deoxyribonuclease subunit B, found in Alkaliphilus metalliredigens (strain QYMF).